A 172-amino-acid polypeptide reads, in one-letter code: 3-phenylpropionate/cinnamic acid dioxygenase subunit beta (172 aa).

It belongs to the bacterial ring-hydroxylating dioxygenase beta subunit family. This dioxygenase system consists of four proteins: the two subunits of the hydroxylase component (HcaE and HcaF), a ferredoxin (HcaC) and a ferredoxin reductase (HcaD).

It carries out the reaction 3-phenylpropanoate + NADH + O2 + H(+) = 3-(cis-5,6-dihydroxycyclohexa-1,3-dien-1-yl)propanoate + NAD(+). The catalysed reaction is (E)-cinnamate + NADH + O2 + H(+) = (2E)-3-(cis-5,6-dihydroxycyclohexa-1,3-dien-1-yl)prop-2-enoate + NAD(+). The protein operates within aromatic compound metabolism; 3-phenylpropanoate degradation. Functionally, part of the multicomponent 3-phenylpropionate dioxygenase. Converts 3-phenylpropionic acid (PP) and cinnamic acid (CI) into 3-phenylpropionate-dihydrodiol (PP-dihydrodiol) and cinnamic acid-dihydrodiol (CI-dihydrodiol), respectively. In Escherichia coli O17:K52:H18 (strain UMN026 / ExPEC), this protein is 3-phenylpropionate/cinnamic acid dioxygenase subunit beta.